Reading from the N-terminus, the 399-residue chain is ATP-dependent RNA helicase fal1 (399 aa).

Positions P25–S53 match the Q motif motif. A Helicase ATP-binding domain is found at I56–V226. A69–T76 lines the ATP pocket. The DEAD box motif lies at D174–D177. In terms of domain architecture, Helicase C-terminal spans G237 to L398.

This sequence belongs to the DEAD box helicase family. DDX48/FAL1 subfamily.

It is found in the nucleus. The protein localises to the nucleolus. It carries out the reaction ATP + H2O = ADP + phosphate + H(+). Its function is as follows. ATP-dependent RNA helicase involved in 40S ribosomal subunit biogenesis. Required for the processing and cleavage of 35S pre-rRNA at sites A0, A1, and A2, leading to mature 18S rRNA. The chain is ATP-dependent RNA helicase fal1 (fal1) from Aspergillus clavatus (strain ATCC 1007 / CBS 513.65 / DSM 816 / NCTC 3887 / NRRL 1 / QM 1276 / 107).